The primary structure comprises 76 residues: Small ribosomal subunit protein bS18 (76 aa).

Belongs to the bacterial ribosomal protein bS18 family. In terms of assembly, part of the 30S ribosomal subunit. Forms a tight heterodimer with protein bS6.

Its function is as follows. Binds as a heterodimer with protein bS6 to the central domain of the 16S rRNA, where it helps stabilize the platform of the 30S subunit. The protein is Small ribosomal subunit protein bS18 of Nitrosomonas europaea (strain ATCC 19718 / CIP 103999 / KCTC 2705 / NBRC 14298).